A 321-amino-acid chain; its full sequence is L-lactate dehydrogenase (321 aa).

NAD(+) contacts are provided by residues V19, D40, K45, Y71, and 85-86; that span reads GA. Residues Q88, R94, and 126–129 contribute to the substrate site; that span reads NPVD. Residues 124-126 and S149 contribute to the NAD(+) site; that span reads ATN. Substrate is bound at residue 154–157; sequence DTAR. Residues R159 and H174 each coordinate beta-D-fructose 1,6-bisphosphate. Residue H181 is the Proton acceptor of the active site. Y226 is modified (phosphotyrosine). T235 is a binding site for substrate.

The protein belongs to the LDH/MDH superfamily. LDH family. In terms of assembly, homotetramer.

The protein resides in the cytoplasm. It carries out the reaction (S)-lactate + NAD(+) = pyruvate + NADH + H(+). It functions in the pathway fermentation; pyruvate fermentation to lactate; (S)-lactate from pyruvate: step 1/1. With respect to regulation, allosterically activated by fructose 1,6-bisphosphate (FBP). Its function is as follows. Catalyzes the conversion of lactate to pyruvate. This chain is L-lactate dehydrogenase, found in Oceanobacillus iheyensis (strain DSM 14371 / CIP 107618 / JCM 11309 / KCTC 3954 / HTE831).